Reading from the N-terminus, the 111-residue chain is Universal stress protein B (111 aa).

2 consecutive transmembrane segments (helical) span residues 1–21 (MIST…NMAR) and 90–110 (FLLT…MMMW).

This sequence belongs to the universal stress protein B family.

Its subcellular location is the cell inner membrane. The sequence is that of Universal stress protein B from Pectobacterium atrosepticum (strain SCRI 1043 / ATCC BAA-672) (Erwinia carotovora subsp. atroseptica).